An 82-amino-acid chain; its full sequence is Small ribosomal subunit protein bS16 (82 aa).

Belongs to the bacterial ribosomal protein bS16 family.

This Natranaerobius thermophilus (strain ATCC BAA-1301 / DSM 18059 / JW/NM-WN-LF) protein is Small ribosomal subunit protein bS16.